Consider the following 492-residue polypeptide: G2/mitotic-specific cyclin CLB2 (492 aa).

The disordered stretch occupies residues 1 to 176; sequence MPQVTKTNNE…QPEVGERSQS (176 aa). The span at 23–33 shows a compositional bias: polar residues; that stretch reads QESISTIKNTT. Positions 34–58 are enriched in low complexity; the sequence is ISNSQHKQQTQQQISSPPQVSVTSS. Polar residues predominate over residues 59 to 83; it reads EGVSHVNTRQYLGDVSNQYITNAKP. Residues 111–135 are compositionally biased toward low complexity; that stretch reads ASDNNNNGSTSSSSNSSNNNNNDAN. The Cyclin N-terminal domain maps to 208-334; sequence EIFSYYYELE…MLTILNFDLN (127 aa).

It belongs to the cyclin family. Cyclin AB subfamily.

2/mitotic-specific cyclin essential for the control of the cell cycle at the G2/M (mitosis) transition. G2/M cyclins accumulate steadily during G2 and are abruptly destroyed at mitosis. Degradation is necessary for the cell to exit from mitosis. Plays a role in morphogenesis by negatively regulating polarized growth. Through binding to CDC28 regulates cytokinesis, partly by phosphorylation of the actomyosin ring component IQG1. Also involved in the phosphorylation of CDC6 and CDC54. The sequence is that of G2/mitotic-specific cyclin CLB2 (CLB2) from Candida albicans (strain SC5314 / ATCC MYA-2876) (Yeast).